The chain runs to 278 residues: Hydroxyethylthiazole kinase (278 aa).

Met51 contacts substrate. Arg127 and Ser173 together coordinate ATP. Gly201 provides a ligand contact to substrate.

This sequence belongs to the Thz kinase family. Requires Mg(2+) as cofactor.

It catalyses the reaction 5-(2-hydroxyethyl)-4-methylthiazole + ATP = 4-methyl-5-(2-phosphooxyethyl)-thiazole + ADP + H(+). Its pathway is cofactor biosynthesis; thiamine diphosphate biosynthesis; 4-methyl-5-(2-phosphoethyl)-thiazole from 5-(2-hydroxyethyl)-4-methylthiazole: step 1/1. In terms of biological role, catalyzes the phosphorylation of the hydroxyl group of 4-methyl-5-beta-hydroxyethylthiazole (THZ). The sequence is that of Hydroxyethylthiazole kinase from Leptothrix cholodnii (strain ATCC 51168 / LMG 8142 / SP-6) (Leptothrix discophora (strain SP-6)).